The following is a 597-amino-acid chain: Zinc finger CCCH domain-containing protein 29 (597 aa).

2 ANK repeats span residues 76–106 (EERT…DVNR) and 111–143 (EKVT…SPNC). C3H1-type zinc fingers lie at residues 254–281 (PYTC…HGVF) and 289–313 (QYRT…HRRD). Polar residues predominate over residues 320-337 (ASTGSAMVSPRSSNQSPE). The segment at 320-341 (ASTGSAMVSPRSSNQSPEMSVM) is disordered.

As to expression, expressed in roots and anthers.

It localises to the nucleus. Involved in salt stress response. May positively modulate plant tolerance to salt stress. This Arabidopsis thaliana (Mouse-ear cress) protein is Zinc finger CCCH domain-containing protein 29.